A 92-amino-acid chain; its full sequence is Small ribosomal subunit protein uS19 (92 aa).

It belongs to the universal ribosomal protein uS19 family.

In terms of biological role, protein S19 forms a complex with S13 that binds strongly to the 16S ribosomal RNA. In Prochlorococcus marinus (strain MIT 9301), this protein is Small ribosomal subunit protein uS19.